The chain runs to 215 residues: Large ribosomal subunit protein uL3 (215 aa).

Positions 136 to 155 are disordered; it reads GVSISHRSHGSTGQRQDPGK. Glutamine 151 is modified (N5-methylglutamine).

Belongs to the universal ribosomal protein uL3 family. Part of the 50S ribosomal subunit. Forms a cluster with proteins L14 and L19. In terms of processing, methylated by PrmB.

One of the primary rRNA binding proteins, it binds directly near the 3'-end of the 23S rRNA, where it nucleates assembly of the 50S subunit. This is Large ribosomal subunit protein uL3 from Rickettsia conorii (strain ATCC VR-613 / Malish 7).